A 123-amino-acid polypeptide reads, in one-letter code: Holo-[acyl-carrier-protein] synthase (123 aa).

The Mg(2+) site is built by Asp-8 and Glu-56.

Belongs to the P-Pant transferase superfamily. AcpS family. Mg(2+) is required as a cofactor.

It localises to the cytoplasm. It carries out the reaction apo-[ACP] + CoA = holo-[ACP] + adenosine 3',5'-bisphosphate + H(+). Its function is as follows. Transfers the 4'-phosphopantetheine moiety from coenzyme A to a Ser of acyl-carrier-protein. The protein is Holo-[acyl-carrier-protein] synthase of Clostridium beijerinckii (strain ATCC 51743 / NCIMB 8052) (Clostridium acetobutylicum).